The following is a 62-amino-acid chain: DNA gyrase inhibitor YacG (62 aa).

Zn(2+) contacts are provided by Cys9, Cys12, Cys27, and Cys31. Residues Gly43–Glu53 show a composition bias toward basic and acidic residues. Residues Gly43–Glu62 form a disordered region.

Belongs to the DNA gyrase inhibitor YacG family. Interacts with GyrB. Requires Zn(2+) as cofactor.

In terms of biological role, inhibits all the catalytic activities of DNA gyrase by preventing its interaction with DNA. Acts by binding directly to the C-terminal domain of GyrB, which probably disrupts DNA binding by the gyrase. This Citrifermentans bemidjiense (strain ATCC BAA-1014 / DSM 16622 / JCM 12645 / Bem) (Geobacter bemidjiensis) protein is DNA gyrase inhibitor YacG.